Consider the following 64-residue polypeptide: Large ribosomal subunit protein bL33 (64 aa).

The protein belongs to the bacterial ribosomal protein bL33 family.

This Picosynechococcus sp. (strain ATCC 27264 / PCC 7002 / PR-6) (Agmenellum quadruplicatum) protein is Large ribosomal subunit protein bL33.